Reading from the N-terminus, the 355-residue chain is Peptide chain release factor 1 (355 aa).

Gln230 is subject to N5-methylglutamine.

This sequence belongs to the prokaryotic/mitochondrial release factor family. Post-translationally, methylated by PrmC. Methylation increases the termination efficiency of RF1.

The protein localises to the cytoplasm. In terms of biological role, peptide chain release factor 1 directs the termination of translation in response to the peptide chain termination codons UAG and UAA. This Geotalea uraniireducens (strain Rf4) (Geobacter uraniireducens) protein is Peptide chain release factor 1.